The sequence spans 383 residues: Acetylornithine deacetylase (383 aa).

His-80 contributes to the Zn(2+) binding site. Residue Asp-82 is part of the active site. Asp-112 is a binding site for Zn(2+). Glu-144 is a catalytic residue. Glu-145, Glu-169, and His-355 together coordinate Zn(2+).

This sequence belongs to the peptidase M20A family. ArgE subfamily. Homodimer. Zn(2+) is required as a cofactor. Requires Co(2+) as cofactor. It depends on glutathione as a cofactor.

The protein resides in the cytoplasm. It catalyses the reaction N(2)-acetyl-L-ornithine + H2O = L-ornithine + acetate. It functions in the pathway amino-acid biosynthesis; L-arginine biosynthesis; L-ornithine from N(2)-acetyl-L-ornithine (linear): step 1/1. In terms of biological role, catalyzes the hydrolysis of the amide bond of N(2)-acetylated L-amino acids. Cleaves the acetyl group from N-acetyl-L-ornithine to form L-ornithine, an intermediate in L-arginine biosynthesis pathway, and a branchpoint in the synthesis of polyamines. In Erwinia tasmaniensis (strain DSM 17950 / CFBP 7177 / CIP 109463 / NCPPB 4357 / Et1/99), this protein is Acetylornithine deacetylase.